Here is a 325-residue protein sequence, read N- to C-terminus: Phosphate import ATP-binding protein PstB (325 aa).

An ABC transporter domain is found at 79 to 320 (IDNYNLWYSN…PNNEKTKDYI (242 aa)). 111-118 (GPSGCGKS) contributes to the ATP binding site.

Belongs to the ABC transporter superfamily. Phosphate importer (TC 3.A.1.7) family. In terms of assembly, the complex is composed of two ATP-binding proteins (PstB), two transmembrane proteins (PstC and PstA) and a solute-binding protein (PstS).

The protein resides in the cell membrane. It carries out the reaction phosphate(out) + ATP + H2O = ADP + 2 phosphate(in) + H(+). In terms of biological role, part of the ABC transporter complex PstSACB involved in phosphate import. Responsible for energy coupling to the transport system. In Mycoplasmoides gallisepticum (strain R(low / passage 15 / clone 2)) (Mycoplasma gallisepticum), this protein is Phosphate import ATP-binding protein PstB.